Consider the following 425-residue polypeptide: Gamma-glutamyl phosphate reductase (425 aa).

It belongs to the gamma-glutamyl phosphate reductase family.

Its subcellular location is the cytoplasm. It catalyses the reaction L-glutamate 5-semialdehyde + phosphate + NADP(+) = L-glutamyl 5-phosphate + NADPH + H(+). It functions in the pathway amino-acid biosynthesis; L-proline biosynthesis; L-glutamate 5-semialdehyde from L-glutamate: step 2/2. In terms of biological role, catalyzes the NADPH-dependent reduction of L-glutamate 5-phosphate into L-glutamate 5-semialdehyde and phosphate. The product spontaneously undergoes cyclization to form 1-pyrroline-5-carboxylate. This is Gamma-glutamyl phosphate reductase from Opitutus terrae (strain DSM 11246 / JCM 15787 / PB90-1).